The sequence spans 180 residues: Der GTPase-activating protein YihI (180 aa).

2 disordered regions span residues 1–87 (MSRK…MTKQ) and 142–180 (GLLE…DYKG). The span at 23 to 32 (NRTESDVEGR) shows a compositional bias: basic and acidic residues. A compositionally biased stretch (basic residues) spans 33–43 (LRKRAKKRKGL). The segment covering 51-68 (EVNEQKKQSSEQNRDPRL) has biased composition (basic and acidic residues). Over residues 165 to 180 (DLLADFDDINFDDYKG) the composition is skewed to acidic residues.

It belongs to the YihI family. In terms of assembly, interacts with Der.

In terms of biological role, a GTPase-activating protein (GAP) that modifies Der/EngA GTPase function. May play a role in ribosome biogenesis. The sequence is that of Der GTPase-activating protein YihI from Vibrio parahaemolyticus serotype O3:K6 (strain RIMD 2210633).